The following is a 1149-amino-acid chain: Protogenin A (1149 aa).

An N-terminal signal peptide occupies residues 1 to 23 (MASFKRDLYLFLAVFLSISGVWS). Residues 24-932 (FSELFFIKEP…GFYHLDQRSM (909 aa)) are Extracellular-facing. 4 consecutive Ig-like domains span residues 27–117 (LFFI…ARLT), 122–209 (STFT…ATLT), 222–309 (PRII…ANIT), and 314–399 (PSLV…RLIV). 2 cysteine pairs are disulfide-bonded: cysteine 48–cysteine 100 and cysteine 143–cysteine 192. A glycan (N-linked (GlcNAc...) asparagine) is linked at asparagine 78. A glycan (N-linked (GlcNAc...) asparagine) is linked at asparagine 230. A disulfide bridge connects residues cysteine 243 and cysteine 291. Asparagine 300 and asparagine 307 each carry an N-linked (GlcNAc...) asparagine glycan. Cysteines 335 and 382 form a disulfide. Fibronectin type-III domains follow at residues 408–502 (APRN…TLED), 504–600 (PLRA…TPKA), 605–704 (VPLA…VRDR), 711–804 (PPHH…TLPE), and 809–905 (APVG…IHTD). N-linked (GlcNAc...) asparagine glycans are attached at residues asparagine 460 and asparagine 475. Residue asparagine 617 is glycosylated (N-linked (GlcNAc...) asparagine). Residues 646–666 (GQSEAAQAQIPPHHRQHTIGG) are disordered. N-linked (GlcNAc...) asparagine glycosylation is found at asparagine 720, asparagine 741, and asparagine 753. The helical transmembrane segment at 933 to 953 (AGIAVGVCIALTCIIICILIL) threads the bilayer. Residues 954–1149 (ACRSKTRKSC…EQEMTDLHPV (196 aa)) are Cytoplasmic-facing. Residues 1060-1149 (YTETSPENPP…EQEMTDLHPV (90 aa)) are disordered. Positions 1061 to 1073 (TETSPENPPTTLQ) are enriched in polar residues. Over residues 1084-1106 (EGSHSSEGSHETSDSGRYSHDDT) the composition is skewed to basic and acidic residues.

The protein belongs to the immunoglobulin superfamily. DCC family. Expression begins in the posterior region of the embryo and this posterior restriction persists at the 4 s stage. At early somite stages, expressed along the neural tube with lower levels in the lateral and paraxial mesoderm. Expression decreases caudally and rostrally becomes restricted to the ventral part of the brain. Widespread in the spinal cord at 30 hours post-fertilization (hpf) and is also expressed in the lens from this time. At 40 hpf, expression is restricted to the lens.

It localises to the membrane. May play a role in anteroposterior axis elongation. The chain is Protogenin A from Danio rerio (Zebrafish).